We begin with the raw amino-acid sequence, 195 residues long: Probable nicotinate-nucleotide adenylyltransferase (195 aa).

The protein belongs to the NadD family.

The catalysed reaction is nicotinate beta-D-ribonucleotide + ATP + H(+) = deamido-NAD(+) + diphosphate. It functions in the pathway cofactor biosynthesis; NAD(+) biosynthesis; deamido-NAD(+) from nicotinate D-ribonucleotide: step 1/1. Its function is as follows. Catalyzes the reversible adenylation of nicotinate mononucleotide (NaMN) to nicotinic acid adenine dinucleotide (NaAD). This is Probable nicotinate-nucleotide adenylyltransferase from Gluconobacter oxydans (strain 621H) (Gluconobacter suboxydans).